The primary structure comprises 141 residues: uncharacterized protein (141 aa).

2 helical membrane passes run 41–61 (LIML…NYLF) and 95–115 (IIFL…SGFF).

It localises to the cell membrane. This is an uncharacterized protein from Rickettsia prowazekii (strain Madrid E).